The chain runs to 296 residues: 4-hydroxybenzoate octaprenyltransferase (296 aa).

8 consecutive transmembrane segments (helical) span residues isoleucine 28–isoleucine 48, leucine 51–isoleucine 71, leucine 102–leucine 122, phenylalanine 143–phenylalanine 163, alanine 174–methionine 194, phenylalanine 212–alanine 232, valine 233–leucine 253, and phenylalanine 274–phenylalanine 294.

The protein belongs to the UbiA prenyltransferase family. Mg(2+) is required as a cofactor.

Its subcellular location is the cell inner membrane. It catalyses the reaction all-trans-octaprenyl diphosphate + 4-hydroxybenzoate = 4-hydroxy-3-(all-trans-octaprenyl)benzoate + diphosphate. Its pathway is cofactor biosynthesis; ubiquinone biosynthesis. Catalyzes the prenylation of para-hydroxybenzoate (PHB) with an all-trans polyprenyl group. Mediates the second step in the final reaction sequence of ubiquinone-8 (UQ-8) biosynthesis, which is the condensation of the polyisoprenoid side chain with PHB, generating the first membrane-bound Q intermediate 3-octaprenyl-4-hydroxybenzoate. In Neisseria meningitidis serogroup B (strain ATCC BAA-335 / MC58), this protein is 4-hydroxybenzoate octaprenyltransferase.